The sequence spans 507 residues: Phosphoprotein (507 aa).

S86 and S151 each carry phosphoserine. Positions 137-160 (DGVEVWGGDEESENSDVDSGEPDP) are enriched in acidic residues. A disordered region spans residues 137-307 (DGVEVWGGDE…QSNIEPEDDY (171 aa)). 2 stretches are compositionally biased toward basic and acidic residues: residues 189 to 199 (EIQKLLEDQSR) and 222 to 233 (TASEKPIKKGTD). Composition is skewed to low complexity over residues 236 to 252 (STSSGTMAESSSTGGAT) and 266 to 278 (NASAENALASASN). Residues 279–301 (VSPTQGSKTESGTTTSRISQSNI) show a composition bias toward polar residues. The segment at 304-376 (EDDYDDELFS…LSSVMIAIPG (73 aa)) is multimerization. Residues 459–507 (ASRSVIRSIIKSSHLGEDRKDYLMSLLNDIQGSKDLAQFHQMLVKILKN) form an interaction with the nucleocapsid (N-RNA) region.

The protein belongs to the morbillivirus P protein family. Homotetramer. Interacts (via multimerization domain) with polymerase L; this interaction forms the polymerase L-P complex. Interacts (via N-terminus) with N0 (via Ncore); this interaction allows P to chaperon N0 to avoid N polymerization before encapsidation. Interacts (via C-terminus) with N-RNA template; this interaction positions the polymerase on the template for both transcription and replication. Post-translationally, phosphorylation on serines by host CK2 is necessary for the formation of viral factories.

Its function is as follows. Essential cofactor of the RNA polymerase L that plays a central role in the transcription and replication by forming the polymerase complex with RNA polymerase L and recruiting L to the genomic N-RNA template for RNA synthesis. Also plays a central role in the encapsidation of nascent RNA chains by forming the encapsidation complex with the nucleocapsid protein N (N-P complex). Acts as a chaperone for newly synthesized free N protein, so-called N0, allowing encapsidation of nascent RNA chains during replication. The nucleoprotein protein N prevents excessive phosphorylation of P, which leads to down-regulation of viral transcription/ replication. Participates, together with N, in the formation of viral factories (viroplasms), which are large inclusions in the host cytoplasm where replication takes place. This Bos indicus (Zebu) protein is Phosphoprotein (P/V).